The primary structure comprises 562 residues: Protein wntless (562 aa).

The Cytoplasmic segment spans residues 1 to 13; it reads MSGTILENLSGRK. Residues 14–34 traverse the membrane as a helical segment; that stretch reads LSILVSSLLLCQVACFLIGGL. Over 35–239 the chain is Lumenal; the sequence is YAPVPAGHQI…AIHQNGGFTQ (205 aa). N-linked (GlcNAc...) asparagine glycans are attached at residues asparagine 58 and asparagine 103. The helical transmembrane segment at 240–260 threads the bilayer; the sequence is VWLLLKSVLFPFIIGIMVWFW. Over 261–270 the chain is Cytoplasmic; that stretch reads RRVHILQRSP. The chain crosses the membrane as a helical span at residues 271–291; the sequence is ALLEYMLLYLGGALSFLNLPL. Topologically, residues 292–311 are lumenal; it reads EYLTLSFEMPYMLLLSDVRQ. A helical transmembrane segment spans residues 312–332; sequence GIFYAMLLSFWLVFAGEHMLI. At 333-344 the chain is on the cytoplasmic side; that stretch reads QDSPNKSTIRSR. The helical transmembrane segment at 345 to 365 threads the bilayer; sequence YWKHLSAVVVGCISLFVFDIC. At 366–390 the chain is on the lumenal side; sequence ERGMQLRNPFYSIWTTPLGAKVAMS. A helical transmembrane segment spans residues 391 to 411; the sequence is FIVLAGVSAGIYFLFLCYMVW. Residues 412–441 lie on the Cytoplasmic side of the membrane; that stretch reads KVFKDIGDKRTSLPSMSQARRLHYEGLIYR. Residues 442 to 462 traverse the membrane as a helical segment; the sequence is FKFLMLATLLCAGLTVAGFIM. The Lumenal portion of the chain corresponds to 463–482; the sequence is GQMAEGHWKWNEDIEIQLTS. The helical transmembrane segment at 483 to 503 threads the bilayer; sequence AFLTGVYGMWNIYIFALLILY. The Cytoplasmic segment spans residues 504-562; the sequence is APSHKQWPTMRHSDETTQSNENIVASAASEEIEFSNLPSDSNPSEISSLTSFTRKVAFD. The interval 538 to 562 is disordered; the sequence is SNLPSDSNPSEISSLTSFTRKVAFD. Residues 539–556 show a composition bias toward polar residues; sequence NLPSDSNPSEISSLTSFT.

This sequence belongs to the wntless family. As to quaternary structure, interacts with wg; in the Golgi. Interacts with Vps35, a component of the retromer complex; wls stability is regulated by Vps35.

Its subcellular location is the presynaptic cell membrane. The protein localises to the postsynaptic cell membrane. The protein resides in the cell membrane. It localises to the endoplasmic reticulum membrane. It is found in the endosome membrane. Its subcellular location is the golgi apparatus membrane. Its function is as follows. A segment polarity gene required for wingless (wg)-dependent patterning processes, acting in both wg-sending cells and wg-target cells. In non-neuronal cells wls directs wg secretion. The wls traffic loop encompasses the Golgi, the cell surface, an endocytic compartment and a retrograde route leading back to the Golgi, and involves clathrin-mediated endocytosis and the retromer complex (a conserved protein complex consisting of Vps35 and Vps26). In neuronal cells (the larval motorneuron NMJ), the wg signal moves across the synapse via the release of wls-containing exosome-like vesicles. Postsynaptic wls is required for the trafficking of fz2 through the fz2-interacting protein Grip. In Drosophila mojavensis (Fruit fly), this protein is Protein wntless.